Here is a 267-residue protein sequence, read N- to C-terminus: Pro-opiomelanocortin (267 aa).

Positions 1–26 (MPRSCCSRSGALLLALLLQASMEVRG) are cleaved as a signal peptide. Cysteine 28 and cysteine 50 are disulfide-bonded. A glycan (O-linked (HexNAc...) threonine) is linked at threonine 71. The residue at position 87 (phenylalanine 87) is a Phenylalanine amide. Disordered regions lie at residues 88–175 (GRRN…FPLE), 181–200 (TGQRLREGDGPDGPADDGAG), and 222–241 (RMEHFRWGSPPKDKRYGGFM). N-linked (GlcNAc...) asparagine glycosylation is present at asparagine 91. Positions 121–145 (PEPRSDGAKPGPREGKRSYSMEHFR) are enriched in basic and acidic residues. Glutamate 134 carries the glutamic acid 1-amide modification. Position 138 is an N-acetylserine; in Corticotropin (serine 138). Valine 150 bears the Valine amide mark. Serine 168 is modified (phosphoserine). The span at 222-237 (RMEHFRWGSPPKDKRY) shows a compositional bias: basic and acidic residues.

It belongs to the POMC family. In terms of processing, specific enzymatic cleavages at paired basic residues yield the different active peptides. Post-translationally, O-glycosylated; reducing sugar is probably N-acetylgalactosamine. In terms of tissue distribution, ACTH and MSH are produced by the pituitary gland.

The protein resides in the secreted. In terms of biological role, stimulates the adrenal glands to release cortisol. Functionally, anorexigenic peptide. Increases the pigmentation of skin by increasing melanin production in melanocytes. Its function is as follows. Increases the pigmentation of skin by increasing melanin production in melanocytes. Endogenous orexigenic opiate. In terms of biological role, endogenous opiate. This Homo sapiens (Human) protein is Pro-opiomelanocortin (POMC).